The sequence spans 216 residues: MINMTRKLYYEDAYLKEAKGRVLEIRDNAILLDQTIFYPTGGGQPHDRGTINGVEVLDVYKDEEGNVWHVVKEPEKFKVGDEVELKIDWDYRYKLMRIHTGLHLLEHVLNEVLGEGNWQLVGSGMSVEKGRYDIAYPENLNKYKEQIISLFNKYVDEGGEVKIWWEGDRRYTQIRDFEVIPCGGTHVKDIKEIGHIKKLKRSSIGRGKQRLEMWLE.

3 residues coordinate Zn(2+): His-99, His-103, and Cys-182.

It belongs to the class-II aminoacyl-tRNA synthetase family. Editing domain AlaX-M subfamily. Monomer. Zn(2+) is required as a cofactor.

Its subcellular location is the cytoplasm. Functions in trans to edit the amino acid moiety from mischarged charged Gly-tRNA(Ala) and Ser-tRNA(Ala). In Pyrococcus horikoshii (strain ATCC 700860 / DSM 12428 / JCM 9974 / NBRC 100139 / OT-3), this protein is Alanyl-tRNA editing protein AlaX-M (alaXM).